Consider the following 677-residue polypeptide: Methionine--tRNA ligase (677 aa).

A 'HIGH' region motif is present at residues P15–H25. Residues C146, C149, C159, and C162 each coordinate Zn(2+). The 'KMSKS' region motif lies at K333 to S337. An ATP-binding site is contributed by K336. The 103-residue stretch at D575–K677 folds into the tRNA-binding domain.

This sequence belongs to the class-I aminoacyl-tRNA synthetase family. MetG type 1 subfamily. As to quaternary structure, homodimer. Zn(2+) serves as cofactor.

It localises to the cytoplasm. It carries out the reaction tRNA(Met) + L-methionine + ATP = L-methionyl-tRNA(Met) + AMP + diphosphate. Its function is as follows. Is required not only for elongation of protein synthesis but also for the initiation of all mRNA translation through initiator tRNA(fMet) aminoacylation. This Escherichia coli O17:K52:H18 (strain UMN026 / ExPEC) protein is Methionine--tRNA ligase.